The following is a 271-amino-acid chain: Putative pyrimidine-specific ribonucleoside hydrolase RihB (271 aa).

Positions 185 and 197 each coordinate substrate.

Belongs to the IUNH family. RihB subfamily.

The catalysed reaction is a pyrimidine ribonucleoside + H2O = a pyrimidine nucleobase + D-ribose. This Shigella dysenteriae serotype 1 (strain Sd197) protein is Putative pyrimidine-specific ribonucleoside hydrolase RihB (rihB).